A 93-amino-acid polypeptide reads, in one-letter code: UPF0223 protein LACR_0546 (93 aa).

Belongs to the UPF0223 family.

This is UPF0223 protein LACR_0546 from Lactococcus lactis subsp. cremoris (strain SK11).